Consider the following 282-residue polypeptide: 2-dehydro-3-deoxyphosphooctonate aldolase (282 aa).

The protein belongs to the KdsA family.

Its subcellular location is the cytoplasm. The enzyme catalyses D-arabinose 5-phosphate + phosphoenolpyruvate + H2O = 3-deoxy-alpha-D-manno-2-octulosonate-8-phosphate + phosphate. It functions in the pathway carbohydrate biosynthesis; 3-deoxy-D-manno-octulosonate biosynthesis; 3-deoxy-D-manno-octulosonate from D-ribulose 5-phosphate: step 2/3. The protein operates within bacterial outer membrane biogenesis; lipopolysaccharide biosynthesis. The polypeptide is 2-dehydro-3-deoxyphosphooctonate aldolase (Shewanella pealeana (strain ATCC 700345 / ANG-SQ1)).